Reading from the N-terminus, the 295-residue chain is MLILPIVKGEYKKDYNLKHLTWFKVGGNAEIFFKPLDSEDLKSFLIQNKQKLPIKTFGAGSNIIIRDGGIEGVVIKLGQNFSNIEFIDNHLIVGSSCLNYNLAKFCQANAISGFEFLVGIPGTIGGGVAMNAGAYGSEFKDIVVQIEAIDFAGNFLTFTNEAIGFKYRSNNLPKNLIILKVVFKINKGDSENILLRMNEINNARSSTQPIKERTGGSTFANPEGHKSWELIDKAGLRGYRIGGASMSELHCNFMINNGDATAKDLEDLGDFVRQKVCEDSGVKLEWEIKRIGRHP.

Positions 24-188 constitute an FAD-binding PCMH-type domain; sequence KVGGNAEIFF…LKVVFKINKG (165 aa). The active site involves Arg168. Ser217 serves as the catalytic Proton donor. Glu287 is a catalytic residue.

This sequence belongs to the MurB family. The cofactor is FAD.

It is found in the cytoplasm. It catalyses the reaction UDP-N-acetyl-alpha-D-muramate + NADP(+) = UDP-N-acetyl-3-O-(1-carboxyvinyl)-alpha-D-glucosamine + NADPH + H(+). It participates in cell wall biogenesis; peptidoglycan biosynthesis. Functionally, cell wall formation. This is UDP-N-acetylenolpyruvoylglucosamine reductase from Rickettsia peacockii (strain Rustic).